We begin with the raw amino-acid sequence, 346 residues long: Holliday junction branch migration complex subunit RuvB (346 aa).

Residues 1-11 (MTEQRTIASSA) are compositionally biased toward polar residues. Residues 1-20 (MTEQRTIASSATREDEAADA) form a disordered region. The segment at 1–183 (MTEQRTIASS…FGIVQRLEFY (183 aa)) is large ATPase domain (RuvB-L). ATP is bound by residues I22, R23, G64, K67, T68, T69, 130-132 (EDF), R173, Y183, and R220. Mg(2+) is bound at residue T68. Positions 184–254 (SPQELTRIVI…VAQAAMQMLK (71 aa)) are small ATPAse domain (RuvB-S). Positions 257-346 (PEGFDELDRR…PAIGEPGDLF (90 aa)) are head domain (RuvB-H). R293, R312, and R317 together coordinate DNA.

The protein belongs to the RuvB family. As to quaternary structure, homohexamer. Forms an RuvA(8)-RuvB(12)-Holliday junction (HJ) complex. HJ DNA is sandwiched between 2 RuvA tetramers; dsDNA enters through RuvA and exits via RuvB. An RuvB hexamer assembles on each DNA strand where it exits the tetramer. Each RuvB hexamer is contacted by two RuvA subunits (via domain III) on 2 adjacent RuvB subunits; this complex drives branch migration. In the full resolvosome a probable DNA-RuvA(4)-RuvB(12)-RuvC(2) complex forms which resolves the HJ.

The protein resides in the cytoplasm. It carries out the reaction ATP + H2O = ADP + phosphate + H(+). The RuvA-RuvB-RuvC complex processes Holliday junction (HJ) DNA during genetic recombination and DNA repair, while the RuvA-RuvB complex plays an important role in the rescue of blocked DNA replication forks via replication fork reversal (RFR). RuvA specifically binds to HJ cruciform DNA, conferring on it an open structure. The RuvB hexamer acts as an ATP-dependent pump, pulling dsDNA into and through the RuvAB complex. RuvB forms 2 homohexamers on either side of HJ DNA bound by 1 or 2 RuvA tetramers; 4 subunits per hexamer contact DNA at a time. Coordinated motions by a converter formed by DNA-disengaged RuvB subunits stimulates ATP hydrolysis and nucleotide exchange. Immobilization of the converter enables RuvB to convert the ATP-contained energy into a lever motion, pulling 2 nucleotides of DNA out of the RuvA tetramer per ATP hydrolyzed, thus driving DNA branch migration. The RuvB motors rotate together with the DNA substrate, which together with the progressing nucleotide cycle form the mechanistic basis for DNA recombination by continuous HJ branch migration. Branch migration allows RuvC to scan DNA until it finds its consensus sequence, where it cleaves and resolves cruciform DNA. The protein is Holliday junction branch migration complex subunit RuvB of Xanthomonas campestris pv. campestris (strain 8004).